Consider the following 98-residue polypeptide: Small ribosomal subunit protein bS18c (98 aa).

Residues 1–13 (MSKQSFDFKRYKP) show a composition bias toward basic and acidic residues. Residues 1 to 26 (MSKQSFDFKRYKPEAPSGSRKRPLKK) form a disordered region.

Belongs to the bacterial ribosomal protein bS18 family. In terms of assembly, part of the 30S ribosomal subunit.

Its subcellular location is the plastid. The protein localises to the chloroplast. This Gnetum parvifolium (Small-leaved jointfir) protein is Small ribosomal subunit protein bS18c.